Here is a 955-residue protein sequence, read N- to C-terminus: Thyroid hormone receptor-associated protein 3 (955 aa).

Residues 1–94 (MSKTNKSKSG…YFRGRNRGFY (94 aa)) are disordered. Ser-2 bears the N-acetylserine mark. A required for mRNA splicing activation region spans residues 2–190 (SKTNKSKSGS…KSSSKDSRPS (189 aa)). Residues 14–51 (SRSRSASRSRSRSFSKSRSRSRSLSRSRKRRLSSRSRS) show a composition bias toward basic residues. Position 17 is a dimethylated arginine (Arg-17). Residues 58–75 (HNRERNHPRVYQNRDFRG) are compositionally biased toward basic and acidic residues. Arg-66 carries the asymmetric dimethylarginine modification. Low complexity predominate over residues 82–94 (RPYYFRGRNRGFY). Arg-101 and Arg-108 each carry asymmetric dimethylarginine. The interval 117 to 559 (AYSPRRGRSR…AKGDFPTGKS (443 aa)) is disordered. Over residues 121–143 (RRGRSRSRSPKRRSPSPRSRSHS) the composition is skewed to basic residues. Residues 144-155 (RNSDKSSSDRSR) are compositionally biased toward basic and acidic residues. Positions 157–166 (SSSSRSSSNH) are enriched in low complexity. Basic and acidic residues predominate over residues 167-188 (SRVESSKRKSAKEKKSSSKDSR). Residue Lys-202 forms a Glycyl lysine isopeptide (Lys-Gly) (interchain with G-Cter in SUMO1); alternate linkage. Lys-202 participates in a covalent cross-link: Glycyl lysine isopeptide (Lys-Gly) (interchain with G-Cter in SUMO2); alternate. The span at 204–220 (QTFSGGTSQDTKASESS) shows a compositional bias: polar residues. Residue Lys-215 forms a Glycyl lysine isopeptide (Lys-Gly) (interchain with G-Cter in SUMO2) linkage. At Ser-220 the chain carries Phosphoserine. A Glycyl lysine isopeptide (Lys-Gly) (interchain with G-Cter in SUMO2); alternate cross-link involves residue Lys-221. Lys-221 carries the post-translational modification N6-acetyllysine; alternate. A phosphoserine mark is found at Ser-232, Ser-237, Ser-240, Ser-243, and Ser-248. Lys-252 participates in a covalent cross-link: Glycyl lysine isopeptide (Lys-Gly) (interchain with G-Cter in SUMO2); alternate. N6-methyllysine; alternate is present on Lys-252. Ser-253 and Ser-257 each carry phosphoserine. A compositionally biased stretch (pro residues) spans 266–276 (RPSPVPKPSPP). A compositionally biased stretch (polar residues) spans 282–300 (QMGSTLPSGAGYQSGTHQG). Residues 305-331 (GSGSLSPSKKSPVGKSPPSTGSTYGSS) are compositionally biased toward low complexity. A phosphoserine mark is found at Ser-315, Ser-320, and Ser-323. Thr-324 carries the post-translational modification Phosphothreonine. A Phosphoserine modification is found at Ser-326. Residue Tyr-328 is modified to Phosphotyrosine. Lys-333 is covalently cross-linked (Glycyl lysine isopeptide (Lys-Gly) (interchain with G-Cter in SUMO2)). At Ser-339 the chain carries Phosphoserine. A Glycyl lysine isopeptide (Lys-Gly) (interchain with G-Cter in SUMO2); alternate cross-link involves residue Lys-346. At Lys-346 the chain carries N6-acetyllysine; alternate. Residues 347-377 (RYLEEQKTENGKDKEQKQTNTDKEKIKEKGS) show a composition bias toward basic and acidic residues. Residues Lys-353 and Lys-375 each participate in a glycyl lysine isopeptide (Lys-Gly) (interchain with G-Cter in SUMO2) cross-link. The interval 359–955 (DKEQKQTNTD…EKDNIQPTTE (597 aa)) is required for mRNA decay activity. A phosphoserine mark is found at Ser-377 and Ser-379. A Glycyl lysine isopeptide (Lys-Gly) (interchain with G-Cter in SUMO1); alternate cross-link involves residue Lys-387. Residue Lys-387 forms a Glycyl lysine isopeptide (Lys-Gly) (interchain with G-Cter in SUMO2); alternate linkage. Residues Lys-389 and Lys-396 each participate in a glycyl lysine isopeptide (Lys-Gly) (interchain with G-Cter in SUMO2) cross-link. Thr-397 carries the post-translational modification Phosphothreonine. Lys-401 is covalently cross-linked (Glycyl lysine isopeptide (Lys-Gly) (interchain with G-Cter in SUMO2)). A phosphoserine mark is found at Ser-406 and Ser-408. Positions 414-452 (LRDDFEKKMADFHKEEMDDQDKDKAKGRKESEFDDEPKF) are enriched in basic and acidic residues. Glycyl lysine isopeptide (Lys-Gly) (interchain with G-Cter in SUMO2) cross-links involve residues Lys-421 and Lys-427. Ser-444 is subject to Phosphoserine. Lys-451 is covalently cross-linked (Glycyl lysine isopeptide (Lys-Gly) (interchain with G-Cter in SUMO1); alternate). Residues Lys-451 and Lys-455 each participate in a glycyl lysine isopeptide (Lys-Gly) (interchain with G-Cter in SUMO2); alternate cross-link. Lys-455 is subject to N6-acetyllysine; alternate. Glycyl lysine isopeptide (Lys-Gly) (interchain with G-Cter in SUMO2) cross-links involve residues Lys-461 and Lys-467. Ser-468 carries the phosphoserine modification. Glycyl lysine isopeptide (Lys-Gly) (interchain with G-Cter in SUMO2); alternate cross-links involve residues Lys-470 and Lys-481. 2 positions are modified to N6-acetyllysine; alternate: Lys-470 and Lys-481. Lys-486 participates in a covalent cross-link: Glycyl lysine isopeptide (Lys-Gly) (interchain with G-Cter in SUMO2). Residues 495-521 (FPERSKKEDRGKRSEGGHRGFVPEKNF) are compositionally biased toward basic and acidic residues. N6-acetyllysine is present on Lys-519. Lys-527 is covalently cross-linked (Glycyl lysine isopeptide (Lys-Gly) (interchain with G-Cter in SUMO2); alternate). Lys-527 is subject to N6-acetyllysine; alternate. A Phosphoserine modification is found at Ser-535. Basic and acidic residues predominate over residues 540 to 550 (KTSESRDKLGA). Lys-551 is covalently cross-linked (Glycyl lysine isopeptide (Lys-Gly) (interchain with G-Cter in SUMO2)). Position 552-559 (552-559 (GDFPTGKS)) interacts with ATP. Lys-558 is covalently cross-linked (Glycyl lysine isopeptide (Lys-Gly) (interchain with G-Cter in SUMO2); alternate). Lys-558 bears the N6-acetyllysine; alternate mark. Phosphoserine occurs at positions 560, 562, and 575. A Glycyl lysine isopeptide (Lys-Gly) (interchain with G-Cter in SUMO2) cross-link involves residue Lys-602. Residues Ser-619, Ser-622, Ser-672, Ser-682, and Ser-684 each carry the phosphoserine modification. Residues 663 to 680 (EQEAAKNKKSPEIHRRID) show a composition bias toward basic and acidic residues. Residues 663 to 955 (EQEAAKNKKS…EKDNIQPTTE (293 aa)) form a disordered region. Residues 691–761 (LAHDEMKSPR…RSAEKTEKTH (71 aa)) show a composition bias toward basic and acidic residues. Residue Lys-697 forms a Glycyl lysine isopeptide (Lys-Gly) (interchain with G-Cter in SUMO2) linkage. Ser-698 carries the post-translational modification Phosphoserine. Glycyl lysine isopeptide (Lys-Gly) (interchain with G-Cter in SUMO2) cross-links involve residues Lys-705, Lys-709, Lys-711, Lys-756, and Lys-759. A compositionally biased stretch (basic residues) spans 762 to 775 (KGSKKQKKHRRARD). The segment covering 779–789 (SSSSSSQSSHS) has biased composition (low complexity). The residue at position 811 (Lys-811) is an N6-acetyllysine. Arg-845 bears the Asymmetric dimethylarginine mark. The segment covering 848-859 (YSGNNNNNSNND) has biased composition (low complexity). Thr-874 is modified (phosphothreonine). Residues Lys-876 and Lys-879 each participate in a glycyl lysine isopeptide (Lys-Gly) (interchain with G-Cter in SUMO2) cross-link. Basic and acidic residues predominate over residues 881–895 (YLHDDREGEGSDKWV). 2 positions are modified to phosphoserine: Ser-928 and Ser-939. A compositionally biased stretch (acidic residues) spans 930-940 (EEGEIEDDESG).

This sequence belongs to the BCLAF1/THRAP3 family. As to quaternary structure, associated with the large multiprotein complex TRAP (Mediator complex-like). Interacts with SFPQ; the interaction is dependent on SFPQ phosphorylation at 'Thr-687' and inhibits binding of SFPQ to an ESS1 exonic splicing silencer element-containing RNA. Interacts with NXF1. Component of the SNARP complex which consists at least of SNIP1, SNW1, THRAP3, BCLAF1 and PNN. Associated with spliced mRNP complexes. Interacts with HELZ2 and PPARG. Interacts with CLOCK and BMAL1. Component of a MACOM-like complex, named WTAP complex, composed of WTAP, ZC3H13, CBLL1, KIAA1429, RBM15, BCLAF1 and THRAP3. ADP-ribosylation during genotoxic stress promotes accumulation in nuclear speckles. In terms of tissue distribution, ubiquitous.

It localises to the nucleus. It is found in the nucleoplasm. The protein resides in the nucleus speckle. Its function is as follows. Involved in pre-mRNA splicing. Remains associated with spliced mRNA after splicing which probably involves interactions with the exon junction complex (EJC). Can trigger mRNA decay which seems to be independent of nonsense-mediated decay involving premature stop codons (PTC) recognition. May be involved in nuclear mRNA decay. Involved in regulation of signal-induced alternative splicing. During splicing of PTPRC/CD45 is proposed to sequester phosphorylated SFPQ from PTPRC/CD45 pre-mRNA in resting T-cells. Involved in cyclin-D1/CCND1 mRNA stability probably by acting as component of the SNARP complex which associates with both the 3'end of the CCND1 gene and its mRNA. Involved in response to DNA damage. Is excluced from DNA damage sites in a manner that parallels transcription inhibition; the function may involve the SNARP complex. Initially thought to play a role in transcriptional coactivation through its association with the TRAP complex; however, it is not regarded as a stable Mediator complex subunit. Cooperatively with HELZ2, enhances the transcriptional activation mediated by PPARG, maybe through the stabilization of the PPARG binding to DNA in presence of ligand. May play a role in the terminal stage of adipocyte differentiation. Plays a role in the positive regulation of the circadian clock. Acts as a coactivator of the CLOCK-BMAL1 heterodimer and promotes its transcriptional activator activity and binding to circadian target genes. The sequence is that of Thyroid hormone receptor-associated protein 3 from Homo sapiens (Human).